A 472-amino-acid polypeptide reads, in one-letter code: Membrane-bound acylglycerophosphatidylinositol O-acyltransferase MBOAT7 (472 aa).

Residues 1–5 lie on the Cytoplasmic side of the membrane; that stretch reads MSPEE. Residues 6 to 22 traverse the membrane as a helical segment; that stretch reads WTYLVVLLISIPIGFLF. The Lumenal segment spans residues 23-33; sequence KKAGPGLKRWG. A helical membrane pass occupies residues 34-57; that stretch reads AAAVGLGLTLFTCGPHTLHSLVTI. The Cytoplasmic segment spans residues 58-73; the sequence is LGTWALIQAQPCSCHA. Residues 74 to 93 traverse the membrane as a helical segment; that stretch reads LALAWTFSYLLFFRALSLLG. At 94–194 the chain is on the lumenal side; sequence LPTPTPFTNA…VPSLRPLLRR (101 aa). Residues 195 to 212 form a helical membrane-spanning segment; that stretch reads AWPAPLFGLLFLLSSHLF. Residues 213–231 lie on the Cytoplasmic side of the membrane; it reads PLEAVREDAFYARPLPARL. A helical transmembrane segment spans residues 232–261; that stretch reads FYMIPVFFAFRMRFYVAWIAAECGCIAAGF. At 262–426 the chain is on the lumenal side; that stretch reads GAYPVAAKAR…LSLRDTLRYW (165 aa). Residue asparagine 321 is glycosylated (N-linked (GlcNAc...) asparagine). A helical membrane pass occupies residues 427–447; the sequence is ASVYFCVHVLALAALGLGLAL. The Cytoplasmic portion of the chain corresponds to 448–472; that stretch reads GRGGPGRRKSGAPAPSPASGKLREE. A disordered region spans residues 450–472; sequence GGPGRRKSGAPAPSPASGKLREE.

It belongs to the membrane-bound acyltransferase family. As to quaternary structure, interacts with SPTSSA; the interaction facilitates MBOAT7 location to mitochondria-associated membranes (MAMs).

The protein resides in the endoplasmic reticulum membrane. It carries out the reaction a 1-acyl-sn-glycero-3-phospho-(1D-myo-inositol) + an acyl-CoA = a 1,2-diacyl-sn-glycero-3-phospho-(1D-myo-inositol) + CoA. It catalyses the reaction a 1-acyl-sn-glycero-3-phospho-(1D-myo-inositol) + (5Z,8Z,11Z,14Z)-eicosatetraenoyl-CoA = a 1-acyl-2-(5Z,8Z,11Z,14Z-eicosatetraenoyl)-sn-glycero-3-phospho-(1D-myo-inositol) + CoA. The enzyme catalyses (5Z,8Z,11Z,14Z)-eicosatetraenoyl-CoA + 1-hexadecanoyl-sn-glycero-3-phosphocholine = 1-hexadecanoyl-2-(5Z,8Z,11Z,14Z-eicosatetraenoyl)-sn-glycero-3-phosphocholine + CoA. The catalysed reaction is 1-octadecanoyl-sn-glycero-3-phospho-(1D-myo-inositol) + (5Z,8Z,11Z,14Z)-eicosatetraenoyl-CoA = 1-octadecanoyl-2-(5Z,8Z,11Z,14Z-eicosatetraenoyl)-sn-glycero-3-phospho-(1D-myo-inositol) + CoA. Its pathway is lipid metabolism; phospholipid metabolism. Functionally, acyltransferase which catalyzes the transfer of an acyl group from an acyl-CoA to a lysophosphatidylinositol (1-acylglycerophosphatidylinositol or LPI) leading to the production of a phosphatidylinositol (1,2-diacyl-sn-glycero-3-phosphoinositol or PI) and participates in the reacylation step of the phospholipid remodeling pathway also known as the Lands cycle. Prefers arachidonoyl-CoA as the acyl donor, thus contributing to the regulation of free levels arachidonic acid in cell. In liver, participates in the regulation of triglyceride metabolism through the phosphatidylinositol acyl-chain remodeling regulation. The chain is Membrane-bound acylglycerophosphatidylinositol O-acyltransferase MBOAT7 (MBOAT7) from Bos taurus (Bovine).